A 390-amino-acid chain; its full sequence is Zinc transporter 8 (390 aa).

Residues 1–25 form the signal peptide; it reads MRTNTTATVLLAAAVALLLATAARG. The N-linked (GlcNAc...) asparagine glycan is linked to asparagine 4. The Extracellular portion of the chain corresponds to 26–50; sequence DGGDGGCGKEDAAAGRDRARARGLK. Residues 51–71 form a helical membrane-spanning segment; it reads IAAFFSILVCGALGCGLPSLG. Residues 72-82 lie on the Cytoplasmic side of the membrane; sequence RHVPALRPDGD. Residues 83–103 form a helical membrane-spanning segment; it reads VFFLVKAFAAGVILATGFIHI. The Extracellular portion of the chain corresponds to 104–124; the sequence is LPDAFDNLTDDCLPAGGPWKE. An N-linked (GlcNAc...) asparagine glycan is attached at asparagine 110. The helical transmembrane segment at 125-145 threads the bilayer; the sequence is FPFAGFGAMVGAIGTLVVDTL. Residues 146 to 235 are Cytoplasmic-facing; it reads ATGYFTRALS…DDKETTLRHR (90 aa). Residues 165 to 199 are disordered; it reads VADEEKQSAAATQQHNHHHNHHVVGDGGGGGEEHE. A helical transmembrane segment spans residues 236–256; sequence VISQVLELGIVVHSVIIGISL. Over 257-267 the chain is Extracellular; it reads GASQNPETIKP. The chain crosses the membrane as a helical span at residues 268-288; the sequence is LVVALSFHQMFEGMGLGGCIV. Residues 289 to 296 lie on the Cytoplasmic side of the membrane; that stretch reads QAKFKVRS. The chain crosses the membrane as a helical span at residues 297-317; the sequence is IVTMVLFFCLTTPVGIAVGVG. At 318–329 the chain is on the extracellular side; the sequence is ISSVYNESSPTA. An N-linked (GlcNAc...) asparagine glycan is attached at asparagine 323. A helical transmembrane segment spans residues 330 to 350; that stretch reads LVVEGILNSVAAGILIYMALV. Residues 351-369 lie on the Cytoplasmic side of the membrane; the sequence is DLLAEDFMNPRVQSKGKLQ. The chain crosses the membrane as a helical span at residues 370-390; it reads LGINLAMLAGAGLMSMLAKWA.

The protein belongs to the ZIP transporter (TC 2.A.5) family.

It localises to the cell membrane. Zinc transporter that may mediate zinc uptake from the rhizosphere and may be responsible for the translocation of zinc within the plant. This Oryza sativa subsp. japonica (Rice) protein is Zinc transporter 8 (ZIP8).